The chain runs to 1711 residues: Serine/threonine-protein kinase MRCK beta (1711 aa).

The 267-residue stretch at 76 to 342 folds into the Protein kinase domain; it reads FEIIKVIGRG…IEDFKKHAFF (267 aa). ATP contacts are provided by residues 82–90 and Lys105; that span reads IGRGAFGEV. Asp200 acts as the Proton acceptor in catalysis. Residues Ser221 and Ser233 each carry the phosphoserine; by autocatalysis modification. Thr239 carries the post-translational modification Phosphothreonine; by autocatalysis. Residues 343-413 enclose the AGC-kinase C-terminal domain; that stretch reads EGLNWENIRN…TTESCFSDRG (71 aa). At Thr423 the chain carries Phosphothreonine. 2 coiled-coil regions span residues 431–815 and 878–939; these read QRDL…AHWE and ELQS…FRAD. A disordered region spans residues 461–484; that stretch reads LQESTQTVQSLHGSSRALSNSNRD. Over residues 463-481 the composition is skewed to polar residues; that stretch reads ESTQTVQSLHGSSRALSNS. At Arg671 the chain carries Omega-N-methylarginine. The residue at position 954 (Tyr954) is a Phosphotyrosine. The tract at residues 969 to 1009 is disordered; it reads SSASEQETQAPKPEASPSMSVAASEQQEDMARPPQRPSAVP. The Phorbol-ester/DAG-type zinc-finger motif lies at 1025-1075; it reads AHQFSIKSFSSPTQCSHCTSLMVGLIRQGYACEVCSFACHVSCKDGAPQVC. The PH domain maps to 1095-1214; it reads GTAYKGHVKV…WVGILEGLQS (120 aa). Positions 1240 to 1513 constitute a CNH domain; that stretch reads IKAILTAAIV…RPLNSEGTLN (274 aa). Positions 1583-1596 constitute a CRIB domain; sequence ISNPTNFNHVAHMG. Positions 1611-1711 are disordered; it reads AVPPSQEERP…EGLEQPACDT (101 aa). Residues 1641–1650 show a composition bias toward polar residues; it reads WPSSGGSEPS. Over residues 1664–1675 the composition is skewed to basic and acidic residues; sequence DFDKEPDSDSTK. Residues Ser1680, Ser1682, Ser1686, Ser1690, and Ser1693 each carry the phosphoserine modification.

It belongs to the protein kinase superfamily. AGC Ser/Thr protein kinase family. DMPK subfamily. As to quaternary structure, homodimer and homotetramer via the coiled coil regions. Interacts tightly with GTP-bound but not GDP-bound CDC42. Interacts with TJP1, when in the presence of catalytically active CDC42. Forms a tripartite complex with MYO18A and LURAP1 with the latter acting as an adapter connecting CDC42BPB and MYO18A. LURAP1 binding results in activation of CDC42BPB by abolition of its negative autoregulation. Interacts with STRIP1, STRN3 and SIKE1. Interacts with CPNE4 (via VWFA domain). Interacts with LURAP1. Interacts (via AGC-kinase C-terminal domain) with FAM89B/LRAP25 (via LRR repeat). Forms a tripartite complex with FAM89B/LRAP25 and LIMK1. It depends on Mg(2+) as a cofactor. Post-translationally, proteolytically cleaved by caspases upon apoptosis induction. As to expression, expressed in all tissues examined, with high levels in heart, brain, placenta and lung.

The protein resides in the cytoplasm. Its subcellular location is the cell membrane. It is found in the cell junction. It localises to the cell projection. The protein localises to the lamellipodium. It catalyses the reaction L-seryl-[protein] + ATP = O-phospho-L-seryl-[protein] + ADP + H(+). The catalysed reaction is L-threonyl-[protein] + ATP = O-phospho-L-threonyl-[protein] + ADP + H(+). With respect to regulation, maintained in an inactive, closed conformation by an interaction between the kinase domain and the negative autoregulatory C-terminal coiled-coil region. Agonist binding to the phorbol ester binding site disrupts this, releasing the kinase domain to allow N-terminus-mediated dimerization and kinase activation by transautophosphorylation. Inhibited by chelerythrine chloride. Serine/threonine-protein kinase which is an important downstream effector of CDC42 and plays a role in the regulation of cytoskeleton reorganization and cell migration. Regulates actin cytoskeletal reorganization via phosphorylation of PPP1R12C and MYL9/MLC2. In concert with MYO18A and LURAP1, is involved in modulating lamellar actomyosin retrograde flow that is crucial to cell protrusion and migration. Phosphorylates PPP1R12A. In concert with FAM89B/LRAP25 mediates the targeting of LIMK1 to the lamellipodium resulting in its activation and subsequent phosphorylation of CFL1 which is important for lamellipodial F-actin regulation. This chain is Serine/threonine-protein kinase MRCK beta, found in Homo sapiens (Human).